Here is a 223-residue protein sequence, read N- to C-terminus: ATP-dependent Clp protease proteolytic subunit 2 (223 aa).

The Nucleophile role is filled by Ser118. His143 is a catalytic residue.

Belongs to the peptidase S14 family. As to quaternary structure, fourteen ClpP subunits assemble into 2 heptameric rings which stack back to back to give a disk-like structure with a central cavity, resembling the structure of eukaryotic proteasomes.

It localises to the cytoplasm. It carries out the reaction Hydrolysis of proteins to small peptides in the presence of ATP and magnesium. alpha-casein is the usual test substrate. In the absence of ATP, only oligopeptides shorter than five residues are hydrolyzed (such as succinyl-Leu-Tyr-|-NHMec, and Leu-Tyr-Leu-|-Tyr-Trp, in which cleavage of the -Tyr-|-Leu- and -Tyr-|-Trp bonds also occurs).. In terms of biological role, cleaves peptides in various proteins in a process that requires ATP hydrolysis. Has a chymotrypsin-like activity. Plays a major role in the degradation of misfolded proteins. The polypeptide is ATP-dependent Clp protease proteolytic subunit 2 (Leifsonia xyli subsp. xyli (strain CTCB07)).